Reading from the N-terminus, the 142-residue chain is Large ribosomal subunit protein uL13 (142 aa).

It belongs to the universal ribosomal protein uL13 family. Part of the 50S ribosomal subunit.

Its function is as follows. This protein is one of the early assembly proteins of the 50S ribosomal subunit, although it is not seen to bind rRNA by itself. It is important during the early stages of 50S assembly. The sequence is that of Large ribosomal subunit protein uL13 from Yersinia enterocolitica serotype O:8 / biotype 1B (strain NCTC 13174 / 8081).